Reading from the N-terminus, the 125-residue chain is Large ribosomal subunit protein bL12 (125 aa).

Belongs to the bacterial ribosomal protein bL12 family. Homodimer. Part of the ribosomal stalk of the 50S ribosomal subunit. Forms a multimeric L10(L12)X complex, where L10 forms an elongated spine to which 2 to 4 L12 dimers bind in a sequential fashion. Binds GTP-bound translation factors.

Its function is as follows. Forms part of the ribosomal stalk which helps the ribosome interact with GTP-bound translation factors. Is thus essential for accurate translation. This chain is Large ribosomal subunit protein bL12, found in Chelativorans sp. (strain BNC1).